Reading from the N-terminus, the 366-residue chain is Spermine synthase (366 aa).

N-acetylalanine is present on A2. The residue at position 57 (S57) is a Phosphoserine. The PABS domain maps to 122-362 (RYWPTADGRL…ELWVFYTVWK (241 aa)). S-adenosyl 3-(methylsulfanyl)propylamine is bound at residue Q148. Residues Y177 and D201 each contribute to the spermidine site. S-adenosyl 3-(methylsulfanyl)propylamine contacts are provided by residues E220 and 255–256 (DC). D276 serves as the catalytic Proton acceptor. Residues Y351 and E353 each coordinate spermidine.

Belongs to the spermidine/spermine synthase family. In terms of assembly, homodimer. Dimerization is mediated through the N-terminal domain and seems to be required for activity as deletion of the N-terminal domain causes complete loss of activity.

The enzyme catalyses S-adenosyl 3-(methylsulfanyl)propylamine + spermidine = spermine + S-methyl-5'-thioadenosine + H(+). It participates in amine and polyamine biosynthesis; spermine biosynthesis; spermine from spermidine: step 1/1. In terms of biological role, catalyzes the production of spermine from spermidine and decarboxylated S-adenosylmethionine (dcSAM). Required for normal viability, growth and fertility. The protein is Spermine synthase (Sms) of Mus musculus (Mouse).